Here is a 546-residue protein sequence, read N- to C-terminus: MAKELRFGDDARQQMLAGVNALADAVKATMGPSGRNVVLERSFGAPTVTKDGVSVAKEIEFENRFKNMGAQMVKEVAAKTSDTAGDGTTTATVLARAIVVEGHKAVAAGMNPMDLKRGIDKAVAAVTKKLQEMSKPCKDGKAIAQVGTISANSDQAIGSIIAEAMEKVGKEGVITVEDGNSLENELAVVEGMQFDRGYISPYFINNQQNMSAELEHPFILLVDKKISTIRDMLSVLEAVAKSGPSLLIIAEDVEGEALATLVVNNMRGIVKVCAVKAPGFGDRRKAMLQDIAILTAGEVISEEVGTSLESATLDSLGTAKRVVVTKENTTIIDGEGKAADINARITQIRAQMEETTSDYDREKLQERVAKLAGGVAVIKLVLLPNRMKRKARVEDALHATRAAVEEGIVAGGGVALIRAQKALDGLKGENADQDMGINILRRAIESPLRQIVANAGYEPSVIVNKVAESKDNFGFNAATGEYGDMVEMGILDPTKVTRTALQNAASVASLMLTTECMVADLPKKEEPMGAGEMGGMGGMGGMGGMM.

ATP is bound by residues 29 to 32 (TMGP), Lys-50, 86 to 90 (DGTTT), Gly-412, 476 to 478 (NAA), and Asp-492.

This sequence belongs to the chaperonin (HSP60) family. As to quaternary structure, forms a cylinder of 14 subunits composed of two heptameric rings stacked back-to-back. Interacts with the co-chaperonin GroES.

The protein localises to the cytoplasm. The catalysed reaction is ATP + H2O + a folded polypeptide = ADP + phosphate + an unfolded polypeptide.. Together with its co-chaperonin GroES, plays an essential role in assisting protein folding. The GroEL-GroES system forms a nano-cage that allows encapsulation of the non-native substrate proteins and provides a physical environment optimized to promote and accelerate protein folding. Functionally, may play a protective role against the defense mechanisms generated by the infected macrophages. The polypeptide is Chaperonin GroEL (Legionella micdadei (Tatlockia micdadei)).